A 318-amino-acid chain; its full sequence is Tyrosine--tRNA ligase (318 aa).

Tyr-35 serves as a coordination point for L-tyrosine. The short motif at 40–48 is the 'HIGH' region element; the sequence is PSGKVHLGH. The L-tyrosine site is built by Tyr-154, Gln-158, Asp-161, and Gln-176. The 'KMSKS' region motif lies at 211–215; it reads KMSSS. Ser-214 contacts ATP.

Belongs to the class-I aminoacyl-tRNA synthetase family. TyrS type 3 subfamily. Homodimer.

The protein localises to the cytoplasm. It catalyses the reaction tRNA(Tyr) + L-tyrosine + ATP = L-tyrosyl-tRNA(Tyr) + AMP + diphosphate + H(+). Catalyzes the attachment of tyrosine to tRNA(Tyr) in a two-step reaction: tyrosine is first activated by ATP to form Tyr-AMP and then transferred to the acceptor end of tRNA(Tyr). In Methanosphaera stadtmanae (strain ATCC 43021 / DSM 3091 / JCM 11832 / MCB-3), this protein is Tyrosine--tRNA ligase.